Here is a 285-residue protein sequence, read N- to C-terminus: Acetyl-coenzyme A carboxylase carboxyl transferase subunit beta (285 aa).

The CoA carboxyltransferase N-terminal domain occupies 23-285 (VFRRCDGCSH…HLTAGRRARR (263 aa)). 4 residues coordinate Zn(2+): cysteine 27, cysteine 30, cysteine 46, and cysteine 49. The C4-type zinc finger occupies 27–49 (CDGCSHTHDAAELARTFEVCSQC).

It belongs to the AccD/PCCB family. Acetyl-CoA carboxylase is a heterohexamer composed of biotin carboxyl carrier protein (AccB), biotin carboxylase (AccC) and two subunits each of ACCase subunit alpha (AccA) and ACCase subunit beta (AccD). Zn(2+) serves as cofactor.

It localises to the cytoplasm. The enzyme catalyses N(6)-carboxybiotinyl-L-lysyl-[protein] + acetyl-CoA = N(6)-biotinyl-L-lysyl-[protein] + malonyl-CoA. It functions in the pathway lipid metabolism; malonyl-CoA biosynthesis; malonyl-CoA from acetyl-CoA: step 1/1. Component of the acetyl coenzyme A carboxylase (ACC) complex. Biotin carboxylase (BC) catalyzes the carboxylation of biotin on its carrier protein (BCCP) and then the CO(2) group is transferred by the transcarboxylase to acetyl-CoA to form malonyl-CoA. This chain is Acetyl-coenzyme A carboxylase carboxyl transferase subunit beta, found in Sorangium cellulosum (strain So ce56) (Polyangium cellulosum (strain So ce56)).